Here is a 179-residue protein sequence, read N- to C-terminus: Large ribosomal subunit protein uL6 (179 aa).

Belongs to the universal ribosomal protein uL6 family. As to quaternary structure, part of the 50S ribosomal subunit.

Functionally, this protein binds to the 23S rRNA, and is important in its secondary structure. It is located near the subunit interface in the base of the L7/L12 stalk, and near the tRNA binding site of the peptidyltransferase center. The protein is Large ribosomal subunit protein uL6 of Mycolicibacterium gilvum (strain PYR-GCK) (Mycobacterium gilvum (strain PYR-GCK)).